The following is a 382-amino-acid chain: LIM homeobox transcription factor 1-alpha (382 aa).

LIM zinc-binding domains lie at 33–92 (SVCE…LFAV) and 92–154 (VKCG…EREL). 2 disordered regions span residues 161–208 (AASD…QQRR) and 252–285 (KLARRQQQQQQDQQNTQRLSSAQTNGGGSAGMEG). Positions 195-254 (PKRPRTILTTQQRRAFKASFEVSSKPCRKVRETLAAETGLSVRVVQVWFQNQRAKMKKLA) form a DNA-binding region, homeobox. The segment covering 256 to 269 (RQQQQQQDQQNTQR) has biased composition (low complexity).

In terms of tissue distribution, isoform 1 is expressed in many tissues. Not found in heart, liver, spleen and testis. Relatively highly expressed in fetal brain. Isoform LMX1A-4AB is expressed in testis.

It is found in the nucleus. In terms of biological role, acts as a transcriptional activator by binding to an A/T-rich sequence, the FLAT element, in the insulin gene promoter. Required for development of the roof plate and, in turn, for specification of dorsal cell fates in the CNS and developing vertebrae. This chain is LIM homeobox transcription factor 1-alpha (LMX1A), found in Homo sapiens (Human).